The following is a 614-amino-acid chain: ETS-related transcription factor Elf-1 (614 aa).

Phosphoserine is present on residues S110, S163, S167, and S168. Positions 159 to 199 (TYAHSPGPSSPEQPKRKKGRKTKPPRPDSPTTTPNISVKKK) are disordered. The span at 173–182 (KRKKGRKTKP) shows a compositional bias: basic residues. The residue at position 187 (S187) is a Phosphoserine. Phosphothreonine is present on T190. A DNA-binding region (ETS) is located at residues 208–290 (IYLWEFLLAL…EGQRLVYQFK (83 aa)). The tract at residues 303-371 (DPSCSIESSD…VQPSEALRTV (69 aa)) is disordered. Residues 310–335 (SSDPSLSSTATSSRNPASRSRASSSP) are compositionally biased toward low complexity. S430 carries the post-translational modification Phosphoserine.

The protein belongs to the ETS family. Binds to the underphosphorylated form of RB. May interact with other transcription factors in order to regulate specific genes. Interacts with RUNX1.

It localises to the nucleus. Functionally, transcription factor that activates the LYN and BLK promoters. This chain is ETS-related transcription factor Elf-1 (ELF1), found in Bos taurus (Bovine).